Here is a 538-residue protein sequence, read N- to C-terminus: Importin subunit alpha-6 (538 aa).

An IBB domain is found at 1–58 (MSYKPSAKTEVRRNRYKVSVDADEGRRRREDNMVEIRKNKREENLQKKRREGFNPSMA). The tract at residues 1–69 (MSYKPSAKTE…QPGQDFSSSL (69 aa)) is disordered. Basic and acidic residues predominate over residues 7–46 (AKTEVRRNRYKVSVDADEGRRRREDNMVEIRKNKREENLQ). The span at 56-69 (SMASQPGQDFSSSL) shows a compositional bias: polar residues. ARM repeat units lie at residues 109–149 (NPPI…NIAS), 152–191 (SENTRVIIDSGAVPLFVKLLSSASEEVREQAVWALGNVAG), 194–234 (PKCR…NFCR), 236–275 (KPQPAFEQTKAALPALERLLHSTDEEVLTDASWALSYLSD), 278–317 (NEKIQTVIDAGVIPRLVQLLAHPSPSVLIPALRTIGNIVT), 320–360 (DIQT…NITA), 363–402 (TSQIQEVFQAGIIRPLINLLEIGEFEIKKEAVWAISNATS), and 406–445 (HDQIKFLVSQGCIRPLCDLLPCPDPRVVTVTLEGLENILK).

It belongs to the importin alpha family. Forms a complex with importin subunit beta-1.

The protein resides in the nucleus envelope. Binds to conventional NLS motifs and mediates nuclear protein import across the nuclear envelope. Acts as a cellular receptor for the nuclear import of the virD2 protein of Agrobacterium, but is not essential for Agrobacterium-mediated root transformation. This is Importin subunit alpha-6 from Arabidopsis thaliana (Mouse-ear cress).